We begin with the raw amino-acid sequence, 153 residues long: MAATRRLTRELSDLVEAKMSTLRNIESSDESLLMWTGLLVPEKAPYNKGAFRIEINFPPQYPFMPPKILFKTKIYHPNVDEKGEVCLPIISTDNWKPTTRTEQVLQALVAIVHNPEPEHPLRSDLAEEFVREHKKFMKTAEEFTKKNAEKRPE.

In terms of domain architecture, UBC core spans 2–149 (AATRRLTREL…AEEFTKKNAE (148 aa)). C86 (glycyl thioester intermediate) is an active-site residue.

This sequence belongs to the ubiquitin-conjugating enzyme family.

The catalysed reaction is S-ubiquitinyl-[E1 ubiquitin-activating enzyme]-L-cysteine + [E2 ubiquitin-conjugating enzyme]-L-cysteine = [E1 ubiquitin-activating enzyme]-L-cysteine + S-ubiquitinyl-[E2 ubiquitin-conjugating enzyme]-L-cysteine.. The protein operates within protein modification; protein ubiquitination. In terms of biological role, catalyzes the covalent attachment of ubiquitin to other proteins. This is Ubiquitin-conjugating enzyme E2-18 kDa (Ubc84D) from Drosophila melanogaster (Fruit fly).